Consider the following 336-residue polypeptide: NADH-quinone oxidoreductase subunit H (336 aa).

Transmembrane regions (helical) follow at residues 12 to 32, 84 to 104, 118 to 138, 156 to 176, 193 to 213, 247 to 267, 274 to 294, and 313 to 333; these read FLKI…LTWF, VVMA…GPGF, VNIA…GTIF, AAVV…VILL, GVWF…CMLA, LAEW…LFFG, IFGP…LVFF, and IAWK…AVVV.

The protein belongs to the complex I subunit 1 family. NDH-1 is composed of 14 different subunits. Subunits NuoA, H, J, K, L, M, N constitute the membrane sector of the complex.

The protein localises to the cell inner membrane. It carries out the reaction a quinone + NADH + 5 H(+)(in) = a quinol + NAD(+) + 4 H(+)(out). Functionally, NDH-1 shuttles electrons from NADH, via FMN and iron-sulfur (Fe-S) centers, to quinones in the respiratory chain. The immediate electron acceptor for the enzyme in this species is believed to be ubiquinone. Couples the redox reaction to proton translocation (for every two electrons transferred, four hydrogen ions are translocated across the cytoplasmic membrane), and thus conserves the redox energy in a proton gradient. This subunit may bind ubiquinone. The polypeptide is NADH-quinone oxidoreductase subunit H (Aquifex aeolicus (strain VF5)).